A 249-amino-acid polypeptide reads, in one-letter code: Diaminopimelate epimerase (249 aa).

Substrate is bound by residues N11 and N60. The active-site Proton donor is C69. Residues 70–71 (GN), N164, and 182–183 (ER) contribute to the substrate site. C192 (proton acceptor) is an active-site residue. Position 193 to 194 (193 to 194 (GT)) interacts with substrate.

Belongs to the diaminopimelate epimerase family. As to quaternary structure, homodimer.

Its subcellular location is the cytoplasm. The catalysed reaction is (2S,6S)-2,6-diaminopimelate = meso-2,6-diaminopimelate. It participates in amino-acid biosynthesis; L-lysine biosynthesis via DAP pathway; DL-2,6-diaminopimelate from LL-2,6-diaminopimelate: step 1/1. In terms of biological role, catalyzes the stereoinversion of LL-2,6-diaminopimelate (L,L-DAP) to meso-diaminopimelate (meso-DAP), a precursor of L-lysine and an essential component of the bacterial peptidoglycan. The sequence is that of Diaminopimelate epimerase from Campylobacter jejuni (strain RM1221).